Reading from the N-terminus, the 171-residue chain is Crossover junction endodeoxyribonuclease RuvC (171 aa).

Catalysis depends on residues aspartate 7, glutamate 66, and aspartate 138. 3 residues coordinate Mg(2+): aspartate 7, glutamate 66, and aspartate 138.

Belongs to the RuvC family. In terms of assembly, homodimer which binds Holliday junction (HJ) DNA. The HJ becomes 2-fold symmetrical on binding to RuvC with unstacked arms; it has a different conformation from HJ DNA in complex with RuvA. In the full resolvosome a probable DNA-RuvA(4)-RuvB(12)-RuvC(2) complex forms which resolves the HJ. Mg(2+) is required as a cofactor.

The protein localises to the cytoplasm. It catalyses the reaction Endonucleolytic cleavage at a junction such as a reciprocal single-stranded crossover between two homologous DNA duplexes (Holliday junction).. In terms of biological role, the RuvA-RuvB-RuvC complex processes Holliday junction (HJ) DNA during genetic recombination and DNA repair. Endonuclease that resolves HJ intermediates. Cleaves cruciform DNA by making single-stranded nicks across the HJ at symmetrical positions within the homologous arms, yielding a 5'-phosphate and a 3'-hydroxyl group; requires a central core of homology in the junction. The consensus cleavage sequence is 5'-(A/T)TT(C/G)-3'. Cleavage occurs on the 3'-side of the TT dinucleotide at the point of strand exchange. HJ branch migration catalyzed by RuvA-RuvB allows RuvC to scan DNA until it finds its consensus sequence, where it cleaves and resolves the cruciform DNA. The chain is Crossover junction endodeoxyribonuclease RuvC from Francisella philomiragia subsp. philomiragia (strain ATCC 25017 / CCUG 19701 / FSC 153 / O#319-036).